We begin with the raw amino-acid sequence, 428 residues long: Adenylosuccinate synthetase (428 aa).

GTP is bound by residues 12–18 (GDEGKGK) and 40–42 (GHT). Asp-13 functions as the Proton acceptor in the catalytic mechanism. Residues Asp-13 and Gly-40 each coordinate Mg(2+). IMP contacts are provided by residues 13–16 (DEGK), 38–41 (NAGH), Thr-129, Arg-143, Gln-224, Thr-239, and Arg-303. His-41 functions as the Proton donor in the catalytic mechanism. 299-305 (VTTGRIR) contributes to the substrate binding site. Residues Arg-305, 331–333 (KVD), and 410–412 (AYG) each bind GTP.

Belongs to the adenylosuccinate synthetase family. As to quaternary structure, homodimer. The cofactor is Mg(2+).

It localises to the cytoplasm. It catalyses the reaction IMP + L-aspartate + GTP = N(6)-(1,2-dicarboxyethyl)-AMP + GDP + phosphate + 2 H(+). It participates in purine metabolism; AMP biosynthesis via de novo pathway; AMP from IMP: step 1/2. In terms of biological role, plays an important role in the de novo pathway of purine nucleotide biosynthesis. Catalyzes the first committed step in the biosynthesis of AMP from IMP. This Francisella tularensis subsp. tularensis (strain FSC 198) protein is Adenylosuccinate synthetase.